The chain runs to 347 residues: GTP 3',8-cyclase (347 aa).

Residues 12 to 242 (FRPFGVLRLS…QRIDARWPLR (231 aa)) enclose the Radical SAM core domain. Position 19 (R19) interacts with GTP. Residues C26 and C30 each contribute to the [4Fe-4S] cluster site. Y32 serves as a coordination point for S-adenosyl-L-methionine. Residue C33 coordinates [4Fe-4S] cluster. R65 contacts GTP. G69 contacts S-adenosyl-L-methionine. GTP is bound at residue T104. S129 contacts S-adenosyl-L-methionine. GTP is bound at residue K178. M212 provides a ligand contact to S-adenosyl-L-methionine. [4Fe-4S] cluster contacts are provided by C275 and C278. 280–282 (RLR) serves as a coordination point for GTP. C292 is a [4Fe-4S] cluster binding site.

Belongs to the radical SAM superfamily. MoaA family. Monomer and homodimer. [4Fe-4S] cluster is required as a cofactor.

The catalysed reaction is GTP + AH2 + S-adenosyl-L-methionine = (8S)-3',8-cyclo-7,8-dihydroguanosine 5'-triphosphate + 5'-deoxyadenosine + L-methionine + A + H(+). Its pathway is cofactor biosynthesis; molybdopterin biosynthesis. Functionally, catalyzes the cyclization of GTP to (8S)-3',8-cyclo-7,8-dihydroguanosine 5'-triphosphate. The chain is GTP 3',8-cyclase from Synechococcus sp. (strain WH7803).